We begin with the raw amino-acid sequence, 620 residues long: Glutathione-regulated potassium-efflux system protein KefC (620 aa).

The next 12 membrane-spanning stretches (helical) occupy residues 4–24 (HTLLQALIYLGSAALIVPIAV), 26–46 (LGLGSVLGYLIAGCIIGPWGL), 54–74 (SILHFAEIGVVLMLFVIGLEL), 90–110 (GALQMVVCGGLIGLFCMFLGL), 114–134 (VAELIGMTLALSSTAIAMQAM), 149–169 (FAVLLFQDIAAIPLVAMIPLL), 178–198 (LGAFALSALKVAGALALVVLL), 218–238 (VFSAVALFLVFGFGLLLEEVG), 270–290 (GLLLGLFFIGVGMSIDFGTLV), 294–314 (LRILLLLAGFLAIKIVMLWLV), 327–347 (WFAVLLGQGSKFAFVVFGAAQ), and 359–379 (ALTLAVALSMAATPIFLVLLT). Residues 399–518 (QPRVIVAGFG…AGVAMPERET (120 aa)) enclose the RCK N-terminal domain. A disordered region spans residues 599–620 (QGTAEGKHSGEAADEPEVKPSI).

The protein belongs to the monovalent cation:proton antiporter 2 (CPA2) transporter (TC 2.A.37) family. KefC subfamily. Homodimer. Interacts with the regulatory subunit KefF.

It is found in the cell inner membrane. In terms of biological role, pore-forming subunit of a potassium efflux system that confers protection against electrophiles. Catalyzes K(+)/H(+) antiport. The chain is Glutathione-regulated potassium-efflux system protein KefC from Salmonella choleraesuis (strain SC-B67).